The sequence spans 396 residues: Acetate kinase (396 aa).

Asn-8 lines the Mg(2+) pocket. Residue Lys-15 coordinates ATP. Substrate is bound at residue Arg-89. Asp-146 functions as the Proton donor/acceptor in the catalytic mechanism. ATP-binding positions include 206-210, 283-285, and 331-335; these read HIGNG, DMR, and GVGEN. Glu-383 contacts Mg(2+).

The protein belongs to the acetokinase family. Homodimer. Requires Mg(2+) as cofactor. The cofactor is Mn(2+).

The protein localises to the cytoplasm. The catalysed reaction is acetate + ATP = acetyl phosphate + ADP. The protein operates within metabolic intermediate biosynthesis; acetyl-CoA biosynthesis; acetyl-CoA from acetate: step 1/2. In terms of biological role, catalyzes the formation of acetyl phosphate from acetate and ATP. Can also catalyze the reverse reaction. This Streptococcus pneumoniae (strain ATCC 700669 / Spain 23F-1) protein is Acetate kinase.